The following is a 317-amino-acid chain: Probable F-box protein At2g36090 (317 aa).

The F-box domain maps to 25 to 74 (IESHILTRLDGATLASVSCASSHLHHLASNEILWSKICRSTWPSCSGGSR).

In Arabidopsis thaliana (Mouse-ear cress), this protein is Probable F-box protein At2g36090.